We begin with the raw amino-acid sequence, 249 residues long: Probable transcriptional regulatory protein Tgr7_2237 (249 aa).

This sequence belongs to the TACO1 family.

The protein localises to the cytoplasm. This is Probable transcriptional regulatory protein Tgr7_2237 from Thioalkalivibrio sulfidiphilus (strain HL-EbGR7).